Consider the following 268-residue polypeptide: 4-hydroxy-tetrahydrodipicolinate reductase (268 aa).

7-12 (GANGRM) serves as a coordination point for NAD(+). R34 contacts NADP(+). NAD(+)-binding positions include 97 to 99 (GTT) and 121 to 124 (SENM). H155 serves as the catalytic Proton donor/acceptor. H156 provides a ligand contact to (S)-2,3,4,5-tetrahydrodipicolinate. The active-site Proton donor is the K159. Position 165-166 (165-166 (GT)) interacts with (S)-2,3,4,5-tetrahydrodipicolinate.

It belongs to the DapB family.

Its subcellular location is the cytoplasm. The catalysed reaction is (S)-2,3,4,5-tetrahydrodipicolinate + NAD(+) + H2O = (2S,4S)-4-hydroxy-2,3,4,5-tetrahydrodipicolinate + NADH + H(+). The enzyme catalyses (S)-2,3,4,5-tetrahydrodipicolinate + NADP(+) + H2O = (2S,4S)-4-hydroxy-2,3,4,5-tetrahydrodipicolinate + NADPH + H(+). Its pathway is amino-acid biosynthesis; L-lysine biosynthesis via DAP pathway; (S)-tetrahydrodipicolinate from L-aspartate: step 4/4. Its function is as follows. Catalyzes the conversion of 4-hydroxy-tetrahydrodipicolinate (HTPA) to tetrahydrodipicolinate. This is 4-hydroxy-tetrahydrodipicolinate reductase from Bartonella bacilliformis (strain ATCC 35685 / KC583 / Herrer 020/F12,63).